We begin with the raw amino-acid sequence, 343 residues long: Ribosomal RNA small subunit methyltransferase, chloroplastic (343 aa).

Residues 1–48 (MMNAVITSATINCNSLSPSWTCGDNSPSKLLLGEISAALSRRRTVKVS) constitute a chloroplast transit peptide. Residues histidine 78, methionine 80, glycine 105, glutamate 126, aspartate 151, and asparagine 183 each contribute to the S-adenosyl-L-methionine site.

Belongs to the class I-like SAM-binding methyltransferase superfamily. rRNA adenine N(6)-methyltransferase family.

The protein localises to the plastid. It localises to the chloroplast. Its function is as follows. Required for methylation of the 3' adenosines in the small subunit of plastid rRNA. Essential for chloroplast biogenesis at low temperatures. This is Ribosomal RNA small subunit methyltransferase, chloroplastic from Arabidopsis thaliana (Mouse-ear cress).